Reading from the N-terminus, the 338-residue chain is Fe-S cluster assembly protein DRE2 (338 aa).

Positions Met1–Lys165 are N-terminal SAM-like domain. A linker region spans residues Pro166 to Lys232. Residues Val181–Asp223 are disordered. Composition is skewed to acidic residues over residues Asn190–Leu203 and Asp213–Asp223. [2Fe-2S] cluster-binding residues include Cys242, Cys253, Cys256, and Cys258. The tract at residues Cys242–Cys258 is fe-S binding site A. Cys301, Cys304, Cys312, and Cys315 together coordinate [4Fe-4S] cluster. 2 short sequence motifs (cx2C motif) span residues Cys301–Cys304 and Cys312–Cys315. The interval Cys301–Cys315 is fe-S binding site B.

It belongs to the anamorsin family. Monomer. Interacts with TAH18. Interacts with MIA40. [2Fe-2S] cluster is required as a cofactor. [4Fe-4S] cluster serves as cofactor.

It localises to the cytoplasm. The protein localises to the mitochondrion intermembrane space. Component of the cytosolic iron-sulfur (Fe-S) protein assembly (CIA) machinery required for the maturation of extramitochondrial Fe-S proteins. Part of an electron transfer chain functioning in an early step of cytosolic Fe-S biogenesis, facilitating the de novo assembly of a [4Fe-4S] cluster on the scaffold complex CFD1-NBP35. Electrons are transferred to DRE2 from NADPH via the FAD- and FMN-containing protein TAH18. TAH18-DRE2 are also required for the assembly of the diferric tyrosyl radical cofactor of ribonucleotide reductase (RNR), probably by providing electrons for reduction during radical cofactor maturation in the catalytic small subunit RNR2. This chain is Fe-S cluster assembly protein DRE2, found in Candida glabrata (strain ATCC 2001 / BCRC 20586 / JCM 3761 / NBRC 0622 / NRRL Y-65 / CBS 138) (Yeast).